The following is a 502-amino-acid chain: 4,4'-diapophytoene desaturase (4,4'-diaponeurosporene-forming) (502 aa).

Residue 5–17 (VIGAGVTGLAAAA) coordinates FAD.

The protein belongs to the carotenoid/retinoid oxidoreductase family. CrtN subfamily.

It carries out the reaction 15-cis-4,4'-diapophytoene + 3 FAD + 3 H(+) = all-trans-4,4'-diaponeurosporene + 3 FADH2. It functions in the pathway carotenoid biosynthesis; staphyloxanthin biosynthesis; staphyloxanthin from farnesyl diphosphate: step 2/5. In terms of biological role, involved in the biosynthesis of the yellow-orange carotenoid staphyloxanthin, which plays a role in the virulence via its protective function against oxidative stress. Catalyzes three successive dehydrogenation reactions that lead to the introduction of three double bonds into 4,4'-diapophytoene (dehydrosqualene), with 4,4'-diapophytofluene and 4,4'-diapo-zeta-carotene as intermediates, and 4,4'-diaponeurosporene (the major deep-yellow pigment in staphylococci strains) as the end product. The sequence is that of 4,4'-diapophytoene desaturase (4,4'-diaponeurosporene-forming) from Staphylococcus aureus (strain COL).